Here is a 320-residue protein sequence, read N- to C-terminus: Beta-ketoacyl-[acyl-carrier-protein] synthase III (320 aa).

Residues Cys114 and His247 contribute to the active site. An ACP-binding region spans residues 248–252; sequence QANRR. Asn277 is an active-site residue.

The protein belongs to the thiolase-like superfamily. FabH family. As to quaternary structure, homodimer.

The protein localises to the cytoplasm. The catalysed reaction is malonyl-[ACP] + acetyl-CoA + H(+) = 3-oxobutanoyl-[ACP] + CO2 + CoA. Its pathway is lipid metabolism; fatty acid biosynthesis. Functionally, catalyzes the condensation reaction of fatty acid synthesis by the addition to an acyl acceptor of two carbons from malonyl-ACP. Catalyzes the first condensation reaction which initiates fatty acid synthesis and may therefore play a role in governing the total rate of fatty acid production. Possesses both acetoacetyl-ACP synthase and acetyl transacylase activities. Its substrate specificity determines the biosynthesis of branched-chain and/or straight-chain of fatty acids. In Neisseria meningitidis serogroup A / serotype 4A (strain DSM 15465 / Z2491), this protein is Beta-ketoacyl-[acyl-carrier-protein] synthase III.